The chain runs to 130 residues: Type VII secretion system extracellular protein C (130 aa).

This sequence belongs to the EsxC family. As to quaternary structure, forms both homodimers and heterodimers with EsxA. Homodimerization is calcium-dependent.

The protein localises to the secreted. This Staphylococcus aureus (strain USA300) protein is Type VII secretion system extracellular protein C.